Here is a 61-residue protein sequence, read N- to C-terminus: Large ribosomal subunit protein bL32 (61 aa).

The segment covering Met-1–Arg-16 has biased composition (basic residues). Positions Met-1–Ala-61 are disordered. Over residues Val-28–Leu-44 the composition is skewed to basic and acidic residues.

The protein belongs to the bacterial ribosomal protein bL32 family.

The protein is Large ribosomal subunit protein bL32 of Rhizobium etli (strain CIAT 652).